The sequence spans 514 residues: Histidine ammonia-lyase (514 aa).

The 5-imidazolinone (Ala-Gly) cross-link spans 147–149 (ASG). Ser-148 is modified (2,3-didehydroalanine (Ser)).

Belongs to the PAL/histidase family. Contains an active site 4-methylidene-imidazol-5-one (MIO), which is formed autocatalytically by cyclization and dehydration of residues Ala-Ser-Gly.

Its subcellular location is the cytoplasm. The catalysed reaction is L-histidine = trans-urocanate + NH4(+). It participates in amino-acid degradation; L-histidine degradation into L-glutamate; N-formimidoyl-L-glutamate from L-histidine: step 1/3. The sequence is that of Histidine ammonia-lyase from Gloeobacter violaceus (strain ATCC 29082 / PCC 7421).